Reading from the N-terminus, the 85-residue chain is U4-theraphotoxin-Hhn1a (85 aa).

The N-terminal stretch at 1–22 (MKVTLIAILTCAAVLVLHTTAE) is a signal peptide. Positions 23–48 (EELEAESQLMEVGMPDTELAAVDEER) are excised as a propeptide. 3 disulfides stabilise this stretch: cysteine 52–cysteine 66, cysteine 56–cysteine 77, and cysteine 71–cysteine 82.

This sequence belongs to the neurotoxin 12 (Hwtx-2) family. 02 (Hwtx-2) subfamily. As to quaternary structure, monomer. As to expression, expressed by the venom gland.

Its subcellular location is the secreted. Neurotoxin active on both insects and mammals. This Cyriopagopus hainanus (Chinese bird spider) protein is U4-theraphotoxin-Hhn1a.